We begin with the raw amino-acid sequence, 266 residues long: Methionine aminopeptidase (266 aa).

Histidine 80 lines the substrate pocket. A divalent metal cation-binding residues include aspartate 98, aspartate 109, and histidine 172. Residue histidine 179 participates in substrate binding. Residues glutamate 206 and glutamate 237 each coordinate a divalent metal cation.

The protein belongs to the peptidase M24A family. Methionine aminopeptidase type 1 subfamily. In terms of assembly, monomer. Co(2+) serves as cofactor. It depends on Zn(2+) as a cofactor. The cofactor is Mn(2+). Requires Fe(2+) as cofactor.

It carries out the reaction Release of N-terminal amino acids, preferentially methionine, from peptides and arylamides.. Its function is as follows. Removes the N-terminal methionine from nascent proteins. The N-terminal methionine is often cleaved when the second residue in the primary sequence is small and uncharged (Met-Ala-, Cys, Gly, Pro, Ser, Thr, or Val). Requires deformylation of the N(alpha)-formylated initiator methionine before it can be hydrolyzed. This chain is Methionine aminopeptidase, found in Buchnera aphidicola subsp. Baizongia pistaciae (strain Bp).